Reading from the N-terminus, the 387-residue chain is Exodeoxyribonuclease 7 large subunit (387 aa).

It belongs to the XseA family. As to quaternary structure, heterooligomer composed of large and small subunits.

It is found in the cytoplasm. It catalyses the reaction Exonucleolytic cleavage in either 5'- to 3'- or 3'- to 5'-direction to yield nucleoside 5'-phosphates.. Bidirectionally degrades single-stranded DNA into large acid-insoluble oligonucleotides, which are then degraded further into small acid-soluble oligonucleotides. The protein is Exodeoxyribonuclease 7 large subunit of Campylobacter lari (strain RM2100 / D67 / ATCC BAA-1060).